The chain runs to 198 residues: Cyclotides mra4/mra5 (198 aa).

A signal peptide spans 1 to 22 (MESNKMVVGVLLIAAFALPALA). A propeptide spanning residues 23–79 (LFERDVITHETIEAVLKKSTPNSNTMLQEDAINALTGKTLISQTILEETLLKNGVVG) is cleaved from the precursor. 3 disulfides stabilise this stretch: Cys-84–Cys-100, Cys-88–Cys-102, and Cys-93–Cys-107. The propeptide occupies 111–163 (SLALPTLEKDVITPEALEAVLKSNGGAIVNTKTIISNAIFEETLLNNANHVLG). Cystine bridges form between Cys-167/Cys-183, Cys-171/Cys-185, and Cys-176/Cys-190. A propeptide spanning residues 194–198 (SLALN) is cleaved from the precursor.

It belongs to the cyclotide family. Bracelet subfamily. In terms of processing, these are cyclic peptides. The mature peptides contain 3 disulfide bonds each.

Probably participates in a plant defense mechanism. In Melicytus ramiflorus (Whitey wood), this protein is Cyclotides mra4/mra5.